We begin with the raw amino-acid sequence, 187 residues long: Large ribosomal subunit protein uL22B (187 aa).

This sequence belongs to the universal ribosomal protein uL22 family. As to quaternary structure, component of the large ribosomal subunit (LSU). Mature yeast ribosomes consist of a small (40S) and a large (60S) subunit. The 40S small subunit contains 1 molecule of ribosomal RNA (18S rRNA) and at least 33 different proteins. The large 60S subunit contains 3 rRNA molecules (25S, 5.8S and 5S rRNA) and at least 46 different proteins. uL22 is associated with the polypeptide exit tunnel.

It is found in the cytoplasm. Its function is as follows. Component of the ribosome, a large ribonucleoprotein complex responsible for the synthesis of proteins in the cell. The small ribosomal subunit (SSU) binds messenger RNAs (mRNAs) and translates the encoded message by selecting cognate aminoacyl-transfer RNA (tRNA) molecules. The large subunit (LSU) contains the ribosomal catalytic site termed the peptidyl transferase center (PTC), which catalyzes the formation of peptide bonds, thereby polymerizing the amino acids delivered by tRNAs into a polypeptide chain. The nascent polypeptides leave the ribosome through a tunnel in the LSU and interact with protein factors that function in enzymatic processing, targeting, and the membrane insertion of nascent chains at the exit of the ribosomal tunnel. In Schizosaccharomyces pombe (strain 972 / ATCC 24843) (Fission yeast), this protein is Large ribosomal subunit protein uL22B (rpl1702).